A 347-amino-acid polypeptide reads, in one-letter code: Phosphoribosylformylglycinamidine cyclo-ligase (347 aa).

This sequence belongs to the AIR synthase family.

The protein resides in the cytoplasm. The catalysed reaction is 2-formamido-N(1)-(5-O-phospho-beta-D-ribosyl)acetamidine + ATP = 5-amino-1-(5-phospho-beta-D-ribosyl)imidazole + ADP + phosphate + H(+). It functions in the pathway purine metabolism; IMP biosynthesis via de novo pathway; 5-amino-1-(5-phospho-D-ribosyl)imidazole from N(2)-formyl-N(1)-(5-phospho-D-ribosyl)glycinamide: step 2/2. In Prochlorococcus marinus subsp. pastoris (strain CCMP1986 / NIES-2087 / MED4), this protein is Phosphoribosylformylglycinamidine cyclo-ligase.